The primary structure comprises 580 residues: DBIRD complex subunit ZNF326 (580 aa).

The tract at residues 1–124 (MDFEDDYVHS…YRNSLDSFGG (124 aa)) is mediates transcriptional activation. Residues S48, S56, S63, S69, S81, S82, S91, S106, S114, S118, S121, and S137 each carry the phosphoserine modification. Residue K140 forms a Glycyl lysine isopeptide (Lys-Gly) (interchain with G-Cter in SUMO2) linkage. The tract at residues 156 to 196 (SYSSFSSPHMKPAPVGSRGRGTPAYPESTFGSRSYDAFGGP) is disordered. An Omega-N-methylarginine modification is found at R173. S212 bears the Phosphoserine mark. R235 carries the post-translational modification Omega-N-methylarginine. The Bipartite nuclear localization signal motif lies at 238–260 (KRKMMQIFIKPGGAFIKKPKLAK). A Glycyl lysine isopeptide (Lys-Gly) (interchain with G-Cter in SUMO2) cross-link involves residue K240. K247 carries the N6-acetyllysine; alternate modification. K247 participates in a covalent cross-link: Glycyl lysine isopeptide (Lys-Gly) (interchain with G-Cter in SUMO2); alternate. Glycyl lysine isopeptide (Lys-Gly) (interchain with G-Cter in SUMO2) cross-links involve residues K254 and K264. The tract at residues 256–302 (PKLAKPMDKMNLSKSPTKTDPKNEEEEKRRIEARREKQRRRREKNSE) is disordered. S270 carries the phosphoserine modification. The span at 272-290 (TKTDPKNEEEEKRRIEARR) shows a compositional bias: basic and acidic residues. The C2H2 AKAP95-type 1 zinc-finger motif lies at 314 to 336 (CSFCKFRTFEEKDIELHLESSSH). K401 is covalently cross-linked (Glycyl lysine isopeptide (Lys-Gly) (interchain with G-Cter in SUMO2)). The C2H2 AKAP95-type 2 zinc finger occupies 407–430 (CSACSVYIPALHSSVQLHLKSPDH). Glycyl lysine isopeptide (Lys-Gly) (interchain with G-Cter in SUMO2) cross-links involve residues K459 and K467. Residues 470–580 (NPFEIQDHPQ…ATEQCEHRQM (111 aa)) are disordered. Over residues 483–529 (IEGDEEDEEKIDEPIEEEEEEEEEEEEEGEEAGSVEEEGDVEGEEGT) the composition is skewed to acidic residues. Over residues 530 to 539 (AEAAAAGEAD) the composition is skewed to low complexity. Residues 540-562 (AVGEAEGAGEAEEAEEEEEEEGT) are compositionally biased toward acidic residues.

This sequence belongs to the AKAP95 family. In terms of assembly, component of the DBIRD complex. Interacts with CCAR2; the interaction is direct. Ubiquitously expressed in adult tissues. Highly expressed in neuronal tissues such as brain and neural tube.

Its subcellular location is the nucleus matrix. Its function is as follows. Core component of the DBIRD complex, a multiprotein complex that acts at the interface between core mRNP particles and RNA polymerase II (RNAPII) and integrates transcript elongation with the regulation of alternative splicing: the DBIRD complex affects local transcript elongation rates and alternative splicing of a large set of exons embedded in (A + T)-rich DNA regions. May also play a role in neuronal differentiation. Able to bind DNA and activate expression in vitro. In Mus musculus (Mouse), this protein is DBIRD complex subunit ZNF326 (Znf326).